The primary structure comprises 421 residues: Serine--tRNA ligase (421 aa).

229 to 231 (TAE) is a binding site for L-serine. Position 260–262 (260–262 (RAE)) interacts with ATP. Position 283 (Glu-283) interacts with L-serine. 347–350 (EISS) contributes to the ATP binding site. Ser-383 is a binding site for L-serine.

It belongs to the class-II aminoacyl-tRNA synthetase family. Type-1 seryl-tRNA synthetase subfamily. As to quaternary structure, homodimer. The tRNA molecule binds across the dimer.

The protein resides in the cytoplasm. The catalysed reaction is tRNA(Ser) + L-serine + ATP = L-seryl-tRNA(Ser) + AMP + diphosphate + H(+). It catalyses the reaction tRNA(Sec) + L-serine + ATP = L-seryl-tRNA(Sec) + AMP + diphosphate + H(+). It participates in aminoacyl-tRNA biosynthesis; selenocysteinyl-tRNA(Sec) biosynthesis; L-seryl-tRNA(Sec) from L-serine and tRNA(Sec): step 1/1. Catalyzes the attachment of serine to tRNA(Ser). Is also able to aminoacylate tRNA(Sec) with serine, to form the misacylated tRNA L-seryl-tRNA(Sec), which will be further converted into selenocysteinyl-tRNA(Sec). The protein is Serine--tRNA ligase of Desulfitobacterium hafniense (strain DSM 10664 / DCB-2).